A 274-amino-acid chain; its full sequence is HTH-type transcriptional regulator GadX (274 aa).

Residues Thr-145 to Arg-242 enclose the HTH araC/xylS-type domain. DNA-binding regions (H-T-H motif) lie at residues Ala-162 to Gly-183 and Ile-209 to Tyr-232.

Homodimer.

In terms of biological role, positively regulates the expression of about fifteen genes involved in acid resistance such as gadA, gadB and gadC. Depending on the conditions (growth phase and medium), can repress gadW. In Escherichia coli O6:H1 (strain CFT073 / ATCC 700928 / UPEC), this protein is HTH-type transcriptional regulator GadX (gadX).